The following is a 289-amino-acid chain: Transcriptional regulator Rob (289 aa).

Residues 8–106 (RDLLIWLEGH…SQTPALYRRS (99 aa)) enclose the HTH araC/xylS-type domain. 2 consecutive DNA-binding regions (H-T-H motif) follow at residues 25 to 46 (DNVA…KDVT) and 73 to 96 (ILDI…KKQF).

In terms of biological role, transcriptional regulator. Represses transcription of genes belonging to the flagellar regulon, including flhD, flhB and fliC; probably thereby leading to repression of motility. Binds to regulatory regions of target genes, including the promoters of the flhDC operon and of P-type ATPase mgtA. Involved in post-transcriptional regulation of expression. Represses expression of the flhDC operon in a post-transcriptional manner. Binds to the right arm of the replication origin oriC of the chromosome. Rob binding may influence the formation of the nucleoprotein structure, required for oriC function in the initiation of replication. This is Transcriptional regulator Rob from Salmonella typhimurium (strain LT2 / SGSC1412 / ATCC 700720).